Here is a 92-residue protein sequence, read N- to C-terminus: MTDSDVQPPKIEFPCERYPIKVIGTAGEGFSDLVIEVIQRHAPDLDASTLVMRDSRNGNFLSVQVLITATSVEQLQAIHVDLRATGRVHMVL.

Belongs to the UPF0250 family.

This Ectopseudomonas mendocina (strain ymp) (Pseudomonas mendocina) protein is UPF0250 protein Pmen_3793.